The following is a 105-amino-acid chain: ATP-dependent Clp protease adapter protein ClpS (105 aa).

This sequence belongs to the ClpS family. As to quaternary structure, binds to the N-terminal domain of the chaperone ClpA.

Its function is as follows. Involved in the modulation of the specificity of the ClpAP-mediated ATP-dependent protein degradation. This is ATP-dependent Clp protease adapter protein ClpS from Prochlorococcus marinus (strain MIT 9515).